Reading from the N-terminus, the 565-residue chain is Adenine deaminase (565 aa).

This sequence belongs to the metallo-dependent hydrolases superfamily. Adenine deaminase family. Mn(2+) serves as cofactor.

It carries out the reaction adenine + H2O + H(+) = hypoxanthine + NH4(+). The polypeptide is Adenine deaminase (Methylobacterium nodulans (strain LMG 21967 / CNCM I-2342 / ORS 2060)).